The sequence spans 370 residues: Alpha-ketoglutarate-dependent xanthine dioxygenase xanA (370 aa).

His107 is a substrate binding site. Residues His149 and Asp151 each contribute to the Fe cation site. 2-oxoglutarate is bound by residues Thr195 and Trp325. Residue His340 coordinates Fe cation. Arg352 is a binding site for 2-oxoglutarate.

This sequence belongs to the TfdA dioxygenase family. Requires Fe(2+) as cofactor. Post-translationally, glycosylated. Is subject to both N- and O-linked glycosylation. Phosphorylated.

Its subcellular location is the cytoplasm. It localises to the cytosol. The catalysed reaction is xanthine + 2-oxoglutarate + O2 = urate + succinate + CO2. Cu(2+) and Zn(2+) completely inhibit the xanthine dioxygenase activity, whereas Co(2+), Mn(2+), and Ni(2+) partially inhibit the activity. The inactive metal ions are presumed to compete for the Fe(2+)-binding site. N-oxalylglycine (NOG), a known inhibitor of several Fe(2+)/alpha-ketoglutarate-dependent dioxygenase family members, competes with alpha-ketoglutarate and provides a Ki of 0.12 uM for inhibition. 6,8-dihydroxypurine acts as a slow-binding competitive inhibitor. The thiol-specific inhibitors 5,5'-dithiobis(2-nitrobenzoic acid) (DTNB) and iodoacetamide, inhibit also the catalytic activity. Alpha-ketoglutarate-dependent xanthine dioxygenase is a non-heme mononuclear Fe(2+) enzyme that decarboxylates alpha-ketoglutarate to succinate and CO(2) while hydroxylating xanthine to generate uric acid. Allows xanthine utilization as a nitrogen source. Whereas xanA is highly specific for xanthine, alpha-ketoadipic acid can replace alpha-ketoglutarate as a cosubstrate. Exhibits ferroxidase activity in the absence of substrates. The polypeptide is Alpha-ketoglutarate-dependent xanthine dioxygenase xanA (Emericella nidulans (Aspergillus nidulans)).